Consider the following 542-residue polypeptide: CTP synthase (542 aa).

The segment at 1–265 is amidoligase domain; sequence MTRYIFVTGG…DDFVVERFGL (265 aa). Residue serine 13 participates in CTP binding. Serine 13 is a binding site for UTP. ATP-binding positions include 14–19 and aspartate 71; that span reads SLGKGI. Residues aspartate 71 and glutamate 139 each coordinate Mg(2+). Residues 146–148, 186–191, and lysine 222 contribute to the CTP site; these read DIE and KTKPTQ. Residues 186–191 and lysine 222 each bind UTP; that span reads KTKPTQ. In terms of domain architecture, Glutamine amidotransferase type-1 spans 290-541; that stretch reads TIAMVGKYME…VKAALAQKNK (252 aa). Glycine 351 serves as a coordination point for L-glutamine. Cysteine 378 functions as the Nucleophile; for glutamine hydrolysis in the catalytic mechanism. Residues 379–382, glutamate 402, and arginine 469 contribute to the L-glutamine site; that span reads LGMQ. Catalysis depends on residues histidine 514 and glutamate 516.

Belongs to the CTP synthase family. In terms of assembly, homotetramer.

It catalyses the reaction UTP + L-glutamine + ATP + H2O = CTP + L-glutamate + ADP + phosphate + 2 H(+). The catalysed reaction is L-glutamine + H2O = L-glutamate + NH4(+). It carries out the reaction UTP + NH4(+) + ATP = CTP + ADP + phosphate + 2 H(+). Its pathway is pyrimidine metabolism; CTP biosynthesis via de novo pathway; CTP from UDP: step 2/2. Allosterically activated by GTP, when glutamine is the substrate; GTP has no effect on the reaction when ammonia is the substrate. The allosteric effector GTP functions by stabilizing the protein conformation that binds the tetrahedral intermediate(s) formed during glutamine hydrolysis. Inhibited by the product CTP, via allosteric rather than competitive inhibition. Functionally, catalyzes the ATP-dependent amination of UTP to CTP with either L-glutamine or ammonia as the source of nitrogen. Regulates intracellular CTP levels through interactions with the four ribonucleotide triphosphates. This is CTP synthase from Pseudomonas entomophila (strain L48).